The chain runs to 141 residues: ATP synthase epsilon chain (141 aa).

It belongs to the ATPase epsilon chain family. F-type ATPases have 2 components, CF(1) - the catalytic core - and CF(0) - the membrane proton channel. CF(1) has five subunits: alpha(3), beta(3), gamma(1), delta(1), epsilon(1). CF(0) has three main subunits: a, b and c.

Its subcellular location is the cell inner membrane. Produces ATP from ADP in the presence of a proton gradient across the membrane. This chain is ATP synthase epsilon chain, found in Burkholderia thailandensis (strain ATCC 700388 / DSM 13276 / CCUG 48851 / CIP 106301 / E264).